The primary structure comprises 128 residues: uncharacterized protein (128 aa).

Residues 8–28 (YQAIYLIFAGFTVFGLLLHFY) traverse the membrane as a helical segment.

The protein localises to the membrane. This is an uncharacterized protein from Haemophilus influenzae (strain ATCC 51907 / DSM 11121 / KW20 / Rd).